The following is a 194-amino-acid chain: Peptidyl-tRNA hydrolase (194 aa).

Tyrosine 17 is a tRNA binding site. The active-site Proton acceptor is histidine 22. TRNA contacts are provided by phenylalanine 68, asparagine 70, and asparagine 116.

The protein belongs to the PTH family. As to quaternary structure, monomer.

The protein localises to the cytoplasm. It carries out the reaction an N-acyl-L-alpha-aminoacyl-tRNA + H2O = an N-acyl-L-amino acid + a tRNA + H(+). Hydrolyzes ribosome-free peptidyl-tRNAs (with 1 or more amino acids incorporated), which drop off the ribosome during protein synthesis, or as a result of ribosome stalling. Its function is as follows. Catalyzes the release of premature peptidyl moieties from peptidyl-tRNA molecules trapped in stalled 50S ribosomal subunits, and thus maintains levels of free tRNAs and 50S ribosomes. The protein is Peptidyl-tRNA hydrolase of Histophilus somni (strain 129Pt) (Haemophilus somnus).